Consider the following 360-residue polypeptide: DNA replication and repair protein RecF (360 aa).

30–37 (GRNAQGKT) is a binding site for ATP.

The protein belongs to the RecF family.

It is found in the cytoplasm. The RecF protein is involved in DNA metabolism; it is required for DNA replication and normal SOS inducibility. RecF binds preferentially to single-stranded, linear DNA. It also seems to bind ATP. The protein is DNA replication and repair protein RecF of Desulforudis audaxviator (strain MP104C).